Here is a 158-residue protein sequence, read N- to C-terminus: NAD(P)H-quinone oxidoreductase subunit J, chloroplastic (158 aa).

This sequence belongs to the complex I 30 kDa subunit family. In terms of assembly, NDH is composed of at least 16 different subunits, 5 of which are encoded in the nucleus.

Its subcellular location is the plastid. The protein localises to the chloroplast thylakoid membrane. It carries out the reaction a plastoquinone + NADH + (n+1) H(+)(in) = a plastoquinol + NAD(+) + n H(+)(out). The catalysed reaction is a plastoquinone + NADPH + (n+1) H(+)(in) = a plastoquinol + NADP(+) + n H(+)(out). NDH shuttles electrons from NAD(P)H:plastoquinone, via FMN and iron-sulfur (Fe-S) centers, to quinones in the photosynthetic chain and possibly in a chloroplast respiratory chain. The immediate electron acceptor for the enzyme in this species is believed to be plastoquinone. Couples the redox reaction to proton translocation, and thus conserves the redox energy in a proton gradient. The polypeptide is NAD(P)H-quinone oxidoreductase subunit J, chloroplastic (Coffea arabica (Arabian coffee)).